The primary structure comprises 163 residues: Small ribosomal subunit protein uS5 (163 aa).

The S5 DRBM domain maps to 8–71 (LVEKIVYLNR…ERAKKDMVQI (64 aa)).

Belongs to the universal ribosomal protein uS5 family. Part of the 30S ribosomal subunit. Contacts proteins S4 and S8.

Functionally, with S4 and S12 plays an important role in translational accuracy. Located at the back of the 30S subunit body where it stabilizes the conformation of the head with respect to the body. This chain is Small ribosomal subunit protein uS5, found in Nitratidesulfovibrio vulgaris (strain DSM 19637 / Miyazaki F) (Desulfovibrio vulgaris).